A 348-amino-acid polypeptide reads, in one-letter code: Nicotinate-nucleotide pyrophosphorylase [carboxylating], chloroplastic (348 aa).

The N-terminal 41 residues, 1-41 (MISVSRFLSPQFYAIPRSFVKMSASATQTAGEVSMGIKPPS), are a transit peptide targeting the chloroplast. Residues Arg139, 170–172 (TRK), Arg194, Lys204, Glu237, Asp264, 296–298 (SGN), and 317–319 (SGA) each bind substrate.

This sequence belongs to the NadC/ModD family.

Its subcellular location is the plastid. The protein localises to the chloroplast. The enzyme catalyses nicotinate beta-D-ribonucleotide + CO2 + diphosphate = quinolinate + 5-phospho-alpha-D-ribose 1-diphosphate + 2 H(+). It participates in cofactor biosynthesis; NAD(+) biosynthesis; nicotinate D-ribonucleotide from quinolinate: step 1/1. In terms of biological role, involved in the biosynthesis of NAD(+). Catalyzes the conversion of quinolate to nicotinate to nicotinate beta-D-ribonucleotide. The sequence is that of Nicotinate-nucleotide pyrophosphorylase [carboxylating], chloroplastic from Arabidopsis thaliana (Mouse-ear cress).